The primary structure comprises 469 residues: GDP-fucose protein O-fucosyltransferase 3 (469 aa).

Over 1 to 9 (MVNRIWEKR) the chain is Cytoplasmic. A helical; Signal-anchor for type II membrane protein transmembrane segment spans residues 10 to 30 (FWISCFFIIFLFILVIFQVMV). The Lumenal portion of the chain corresponds to 31–469 (ELGRFEKKET…EFWNLVFKFW (439 aa)). 4 N-linked (GlcNAc...) asparagine glycosylation sites follow: N100, N158, N308, and N333. A disulfide bridge links C379 with C382. A glycan (N-linked (GlcNAc...) asparagine) is linked at N455.

Belongs to the glycosyltransferase 10 family.

The protein resides in the endoplasmic reticulum membrane. The catalysed reaction is L-threonyl-[protein] + GDP-beta-L-fucose = 3-O-(alpha-L-fucosyl)-L-threonyl-[protein] + GDP + H(+). It carries out the reaction L-seryl-[protein] + GDP-beta-L-fucose = 3-O-(alpha-L-fucosyl)-L-seryl-[protein] + GDP + H(+). Its pathway is protein modification; protein glycosylation. In terms of biological role, protein O-fucosyltransferase that specifically catalyzes O-fucosylation of serine or threonine residues in EMI domains of target proteins. Attaches fucose through an O-glycosidic linkage. O-fucosylation of EMI domain-containing proteins may be required for facilitating protein folding and secretion. The chain is GDP-fucose protein O-fucosyltransferase 3 (fut10) from Xenopus laevis (African clawed frog).